Reading from the N-terminus, the 235-residue chain is Ribonuclease PH (235 aa).

Phosphate-binding positions include R86 and 124–126 (GTR).

It belongs to the RNase PH family. Homohexameric ring arranged as a trimer of dimers.

The enzyme catalyses tRNA(n+1) + phosphate = tRNA(n) + a ribonucleoside 5'-diphosphate. Phosphorolytic 3'-5' exoribonuclease that plays an important role in tRNA 3'-end maturation. Removes nucleotide residues following the 3'-CCA terminus of tRNAs; can also add nucleotides to the ends of RNA molecules by using nucleoside diphosphates as substrates, but this may not be physiologically important. Probably plays a role in initiation of 16S rRNA degradation (leading to ribosome degradation) during starvation. This chain is Ribonuclease PH, found in Francisella tularensis subsp. holarctica (strain FTNF002-00 / FTA).